The sequence spans 224 residues: Ribosomal RNA small subunit methyltransferase G (224 aa).

Residues glycine 89, leucine 94, 140-141, and arginine 154 contribute to the S-adenosyl-L-methionine site; that span reads IE.

The protein belongs to the methyltransferase superfamily. RNA methyltransferase RsmG family.

It is found in the cytoplasm. The catalysed reaction is guanosine(527) in 16S rRNA + S-adenosyl-L-methionine = N(7)-methylguanosine(527) in 16S rRNA + S-adenosyl-L-homocysteine. Its function is as follows. Specifically methylates the N7 position of guanine in position 527 of 16S rRNA. The polypeptide is Ribosomal RNA small subunit methyltransferase G (Bordetella avium (strain 197N)).